Reading from the N-terminus, the 179-residue chain is Large ribosomal subunit protein uL5 (179 aa).

It belongs to the universal ribosomal protein uL5 family. Part of the 50S ribosomal subunit; part of the 5S rRNA/L5/L18/L25 subcomplex. Contacts the 5S rRNA and the P site tRNA. Forms a bridge to the 30S subunit in the 70S ribosome.

Its function is as follows. This is one of the proteins that bind and probably mediate the attachment of the 5S RNA into the large ribosomal subunit, where it forms part of the central protuberance. In the 70S ribosome it contacts protein S13 of the 30S subunit (bridge B1b), connecting the 2 subunits; this bridge is implicated in subunit movement. Contacts the P site tRNA; the 5S rRNA and some of its associated proteins might help stabilize positioning of ribosome-bound tRNAs. In Macrococcus caseolyticus (strain JCSC5402) (Macrococcoides caseolyticum), this protein is Large ribosomal subunit protein uL5.